A 93-amino-acid polypeptide reads, in one-letter code: Small ribosomal subunit protein bS6 (93 aa).

This sequence belongs to the bacterial ribosomal protein bS6 family.

In terms of biological role, binds together with bS18 to 16S ribosomal RNA. The polypeptide is Small ribosomal subunit protein bS6 (Phytoplasma australiense).